A 154-amino-acid chain; its full sequence is Low molecular weight protein-tyrosine-phosphatase PtpA (154 aa).

Residue C8 is the Nucleophile of the active site. R14 is a catalytic residue. The active-site Proton donor is the D120.

It belongs to the low molecular weight phosphotyrosine protein phosphatase family.

The enzyme catalyses O-phospho-L-tyrosyl-[protein] + H2O = L-tyrosyl-[protein] + phosphate. Its function is as follows. Dephosphorylates the phosphotyrosine-containing proteins. The protein is Low molecular weight protein-tyrosine-phosphatase PtpA (ptpA) of Staphylococcus saprophyticus subsp. saprophyticus (strain ATCC 15305 / DSM 20229 / NCIMB 8711 / NCTC 7292 / S-41).